We begin with the raw amino-acid sequence, 710 residues long: Fatty acid oxidation complex subunit alpha (710 aa).

The tract at residues 1–190 (MSMEKTFNLA…KMGLVNDVVP (190 aa)) is enoyl-CoA hydratase. The interval 310–710 (RKVKKVMVLG…ASDGSQFYKK (401 aa)) is 3-hydroxyacyl-CoA dehydrogenase.

This sequence in the N-terminal section; belongs to the enoyl-CoA hydratase/isomerase family. It in the central section; belongs to the 3-hydroxyacyl-CoA dehydrogenase family. As to quaternary structure, heterotetramer of two alpha chains (FadJ) and two beta chains (FadI).

Its subcellular location is the cytoplasm. The catalysed reaction is a (3S)-3-hydroxyacyl-CoA = a (2E)-enoyl-CoA + H2O. It catalyses the reaction a 4-saturated-(3S)-3-hydroxyacyl-CoA = a (3E)-enoyl-CoA + H2O. The enzyme catalyses a (3S)-3-hydroxyacyl-CoA + NAD(+) = a 3-oxoacyl-CoA + NADH + H(+). It carries out the reaction (3S)-3-hydroxybutanoyl-CoA = (3R)-3-hydroxybutanoyl-CoA. Its pathway is lipid metabolism; fatty acid beta-oxidation. Its function is as follows. Catalyzes the formation of a hydroxyacyl-CoA by addition of water on enoyl-CoA. Also exhibits 3-hydroxyacyl-CoA epimerase and 3-hydroxyacyl-CoA dehydrogenase activities. This chain is Fatty acid oxidation complex subunit alpha, found in Shewanella frigidimarina (strain NCIMB 400).